The following is a 545-amino-acid chain: T-complex protein 1 subunit gamma (545 aa).

Methionine 1 is modified (N-acetylmethionine). Residues 1-24 (MMGHRPVLVLSQNTKRESGRKVQS) form a disordered region. Residue serine 11 is modified to Phosphoserine. A Glycyl lysine isopeptide (Lys-Gly) (interchain with G-Cter in SUMO2) cross-link involves residue lysine 15. ADP is bound by residues glycine 42, glycine 94, threonine 95, threonine 96, serine 97, threonine 162, and lysine 163. ATP-binding residues include glycine 42, glycine 94, threonine 95, and threonine 96. Serine 170 carries the phosphoserine modification. Position 222 is an N6-acetyllysine (lysine 222). Serine 243 and serine 244 each carry phosphoserine. Tyrosine 247 bears the Phosphotyrosine mark. Glycyl lysine isopeptide (Lys-Gly) (interchain with G-Cter in SUMO2) cross-links involve residues lysine 248 and lysine 249. Serine 252 is modified (phosphoserine). Cysteine 366 and cysteine 372 are joined by a disulfide. Lysine 381 is covalently cross-linked (Glycyl lysine isopeptide (Lys-Gly) (interchain with G-Cter in SUMO2)). Position 411 (glycine 411) interacts with ADP. An ATP-binding site is contributed by glycine 411. 2 positions are modified to phosphothreonine: threonine 430 and threonine 459. The ADP site is built by glycine 482, glutamate 483, glutamate 497, and lysine 502. Glycine 482 contacts ATP. Position 497 (glutamate 497) interacts with ATP. The disordered stretch occupies residues 526–545 (HKKKGDDQSRQGGAPDAGQE).

It belongs to the TCP-1 chaperonin family. As to quaternary structure, component of the chaperonin-containing T-complex (TRiC), a hexadecamer composed of two identical back-to-back stacked rings enclosing a protein folding chamber. Each ring is made up of eight different subunits: TCP1/CCT1, CCT2, CCT3, CCT4, CCT5, CCT6A/CCT6, CCT7, CCT8. Interacts with PACRG. Interacts with DNAAF4. Interacts with DLEC1.

It localises to the cytoplasm. The enzyme catalyses ATP + H2O = ADP + phosphate + H(+). Component of the chaperonin-containing T-complex (TRiC), a molecular chaperone complex that assists the folding of actin, tubulin and other proteins upon ATP hydrolysis. The TRiC complex mediates the folding of WRAP53/TCAB1, thereby regulating telomere maintenance. As part of the TRiC complex may play a role in the assembly of BBSome, a complex involved in ciliogenesis regulating transports vesicles to the cilia. The chain is T-complex protein 1 subunit gamma (CCT3) from Macaca fascicularis (Crab-eating macaque).